A 264-amino-acid polypeptide reads, in one-letter code: Thymidylate synthase (264 aa).

Residues Arg-21 and 126–127 (RR) each bind dUMP. Cys-146 acts as the Nucleophile in catalysis. Residues 166-169 (RSAD), Asn-177, and 207-209 (HLY) each bind dUMP. Asp-169 contributes to the (6R)-5,10-methylene-5,6,7,8-tetrahydrofolate binding site. Ala-263 contributes to the (6R)-5,10-methylene-5,6,7,8-tetrahydrofolate binding site.

It belongs to the thymidylate synthase family. Bacterial-type ThyA subfamily. In terms of assembly, homodimer.

It is found in the cytoplasm. It catalyses the reaction dUMP + (6R)-5,10-methylene-5,6,7,8-tetrahydrofolate = 7,8-dihydrofolate + dTMP. Its pathway is pyrimidine metabolism; dTTP biosynthesis. Its function is as follows. Catalyzes the reductive methylation of 2'-deoxyuridine-5'-monophosphate (dUMP) to 2'-deoxythymidine-5'-monophosphate (dTMP) while utilizing 5,10-methylenetetrahydrofolate (mTHF) as the methyl donor and reductant in the reaction, yielding dihydrofolate (DHF) as a by-product. This enzymatic reaction provides an intracellular de novo source of dTMP, an essential precursor for DNA biosynthesis. The chain is Thymidylate synthase from Bradyrhizobium diazoefficiens (strain JCM 10833 / BCRC 13528 / IAM 13628 / NBRC 14792 / USDA 110).